The chain runs to 383 residues: Dynein axonemal assembly factor 11 (383 aa).

LRR repeat units lie at residues 20–45 (LSNL…ACRE), 46–66 (LEIL…QHLK), 67–89 (YLKY…GCEA), and 90–110 (LERL…ERLR). One can recognise an LRRCT domain in the interval 128–146 (VAGYRAYVVHALPQLRELD). A disordered region spans residues 201-244 (KGERLYGHTPEERLQMLREKEEEERRKREEQRERERSSQFGAIR). Positions 211–239 (EERLQMLREKEEEERRKREEQRERERSSQ) form a coiled coil.

This sequence belongs to the tilB family.

The protein resides in the cytoplasm. It is found in the cytoskeleton. Its subcellular location is the flagellum basal body. Its function is as follows. Involved in the regulation of the cell cycle; is required for the basal body replication and new flagellum biogenesis. The polypeptide is Dynein axonemal assembly factor 11 (dnaaf11) (Trypanosoma brucei brucei).